Here is a 440-residue protein sequence, read N- to C-terminus: Diaminopimelate decarboxylase (440 aa).

K61 is subject to N6-(pyridoxal phosphate)lysine. Pyridoxal 5'-phosphate-binding positions include G234 and 275–278 (EPGR). R278, R314, and Y318 together coordinate substrate. C348 (proton donor) is an active-site residue. Substrate is bound by residues E349 and Y384. Pyridoxal 5'-phosphate is bound at residue Y384. The segment covering 421 to 431 (LAPELEPGPAL) has biased composition (low complexity). The tract at residues 421-440 (LAPELEPGPALSPRPSRDPR) is disordered.

The protein belongs to the Orn/Lys/Arg decarboxylase class-II family. LysA subfamily. As to quaternary structure, homodimer. Pyridoxal 5'-phosphate serves as cofactor.

It carries out the reaction meso-2,6-diaminopimelate + H(+) = L-lysine + CO2. It participates in amino-acid biosynthesis; L-lysine biosynthesis via DAP pathway; L-lysine from DL-2,6-diaminopimelate: step 1/1. Specifically catalyzes the decarboxylation of meso-diaminopimelate (meso-DAP) to L-lysine. In Streptomyces coelicolor (strain ATCC BAA-471 / A3(2) / M145), this protein is Diaminopimelate decarboxylase.